The chain runs to 136 residues: Cystatin-2 (136 aa).

A signal peptide spans 1 to 24; that stretch reads MALLRGFLVCSLLLLSCICKEALG. The Cystatin domain occupies 29–124; sequence GGLENASPEE…CTFEVYNIPW (96 aa). Positions 73 to 77 match the Secondary area of contact motif; the sequence is QIVSG. Intrachain disulfides connect Cys-91–Cys-101 and Cys-115–Cys-135.

It belongs to the cystatin family. As to expression, expressed by the venom gland.

It localises to the secreted. Its function is as follows. Inhibits various C1 cysteine proteases including cathepsin L, papain and cathepsin B. This protein has no toxic activity and its function in the venom is unknown. It may play a role as housekeeping or regulatory protein. This chain is Cystatin-2, found in Crotalus adamanteus (Eastern diamondback rattlesnake).